The following is a 336-amino-acid chain: NADH-quinone oxidoreductase subunit H (336 aa).

8 consecutive transmembrane segments (helical) span residues 14–34 (IIVA…AFLV), 82–102 (IIFL…WAVI), 115–135 (VGIL…IMAG), 161–181 (IGLV…SDVV), 186–206 (TVWF…SALA), 247–267 (ILMS…PLDV), 273–293 (VPGP…FVWV), and 312–332 (VFLP…VTFD).

The protein belongs to the complex I subunit 1 family. NDH-1 is composed of 14 different subunits. Subunits NuoA, H, J, K, L, M, N constitute the membrane sector of the complex.

The protein localises to the cell inner membrane. It carries out the reaction a quinone + NADH + 5 H(+)(in) = a quinol + NAD(+) + 4 H(+)(out). In terms of biological role, NDH-1 shuttles electrons from NADH, via FMN and iron-sulfur (Fe-S) centers, to quinones in the respiratory chain. The immediate electron acceptor for the enzyme in this species is believed to be ubiquinone. Couples the redox reaction to proton translocation (for every two electrons transferred, four hydrogen ions are translocated across the cytoplasmic membrane), and thus conserves the redox energy in a proton gradient. This subunit may bind ubiquinone. The sequence is that of NADH-quinone oxidoreductase subunit H from Rhodospirillum centenum (strain ATCC 51521 / SW).